The sequence spans 368 residues: Glutaminyl-peptide cyclotransferase (368 aa).

The N-terminal stretch at 1 to 33 (MARERRDSKAATFFCLAWALCLALPGFPQHVSG) is a signal peptide. Asparagine 53 carries N-linked (GlcNAc...) asparagine glycosylation. A disulfide bridge links cysteine 143 with cysteine 169. A Zn(2+)-binding site is contributed by aspartate 164. Glutamate 207 serves as the catalytic Proton acceptor. Glutamate 208 lines the Zn(2+) pocket. Aspartate 254 functions as the Proton acceptor in the catalytic mechanism. Asparagine 292 is a glycosylation site (N-linked (GlcNAc...) asparagine). Histidine 336 serves as a coordination point for Zn(2+). Asparagine 352 carries N-linked (GlcNAc...) asparagine glycosylation.

It belongs to the glutaminyl-peptide cyclotransferase family. As to expression, expressed by the venom gland.

The protein localises to the secreted. The catalysed reaction is N-terminal L-glutaminyl-[peptide] = N-terminal 5-oxo-L-prolyl-[peptide] + NH4(+). Functionally, responsible for the biosynthesis of pyroglutamyl peptides. Has a bias against acidic and tryptophan residues adjacent to the N-terminal glutaminyl residue and a lack of importance of chain length after the second residue. Also catalyzes N-terminal pyroglutamate formation. The sequence is that of Glutaminyl-peptide cyclotransferase (QPCT) from Gloydius blomhoffii (Mamushi).